A 223-amino-acid polypeptide reads, in one-letter code: Pleckstrin homology domain-containing family B member 1 (223 aa).

Residues 2-109 form the PH domain; it reads ALVRGGWLWR…WKTALMEANS (108 aa).

As to quaternary structure, homodimer. Interacts (via PH domain) with MYO1C. Interacts (via PH domain) with MYO7A. Binds transducins. In terms of tissue distribution, highly expressed in photoreceptor cells, oligodendrocytes and throughout the myelinated parts of the central nervous system. Detected in brain, liver, kidney, spleen and trachea.

Its subcellular location is the membrane. The protein resides in the cytoplasm. This chain is Pleckstrin homology domain-containing family B member 1 (Plekhb1), found in Rattus norvegicus (Rat).